The chain runs to 389 residues: Trans-2-enoyl-CoA reductase [NADH] (389 aa).

Residues 47–52, 73–74, 110–111, and 138–139 each bind NAD(+); these read GASTGY, FE, DA, and LA. Tyr224 is a binding site for substrate. Catalysis depends on Tyr234, which acts as the Proton donor. Residues Lys243 and 272 to 274 contribute to the NAD(+) site; that span reads LVT.

This sequence belongs to the TER reductase family. As to quaternary structure, monomer.

It catalyses the reaction a 2,3-saturated acyl-CoA + NAD(+) = a (2E)-enoyl-CoA + NADH + H(+). It participates in lipid metabolism; fatty acid biosynthesis. Involved in the fatty acid synthesis (FAS II). Catalyzes the reduction of a carbon-carbon double bond in an enoyl moiety that is covalently linked to a coenzyme A (CoA). In Clostridium perfringens (strain ATCC 13124 / DSM 756 / JCM 1290 / NCIMB 6125 / NCTC 8237 / Type A), this protein is Trans-2-enoyl-CoA reductase [NADH].